The chain runs to 175 residues: Adenine phosphoribosyltransferase (175 aa).

It belongs to the purine/pyrimidine phosphoribosyltransferase family. In terms of assembly, homodimer.

The protein localises to the cytoplasm. It catalyses the reaction AMP + diphosphate = 5-phospho-alpha-D-ribose 1-diphosphate + adenine. Its pathway is purine metabolism; AMP biosynthesis via salvage pathway; AMP from adenine: step 1/1. In terms of biological role, catalyzes a salvage reaction resulting in the formation of AMP, that is energically less costly than de novo synthesis. The protein is Adenine phosphoribosyltransferase of Lactobacillus johnsonii (strain CNCM I-12250 / La1 / NCC 533).